Consider the following 422-residue polypeptide: Signal recognition particle receptor FtsY (422 aa).

Positions 39–86 (PERGVVDRSGGYTASSGITFSQTPTTQPAERIDTSGLPAVGDDATVPR) are disordered. The segment covering 50–66 (YTASSGITFSQTPTTQP) has biased composition (polar residues). Residues 230–237 (GVNGTGKT), 312–316 (DTAGR), and 374–377 (TKLD) each bind GTP.

Belongs to the GTP-binding SRP family. FtsY subfamily. In terms of assembly, part of the signal recognition particle protein translocation system, which is composed of SRP and FtsY.

It localises to the cell membrane. Its subcellular location is the cytoplasm. The enzyme catalyses GTP + H2O = GDP + phosphate + H(+). Its function is as follows. Involved in targeting and insertion of nascent membrane proteins into the cytoplasmic membrane. Acts as a receptor for the complex formed by the signal recognition particle (SRP) and the ribosome-nascent chain (RNC). This chain is Signal recognition particle receptor FtsY, found in Mycobacterium bovis (strain ATCC BAA-935 / AF2122/97).